The sequence spans 463 residues: tRNA-splicing endonuclease subunit Sen2 (463 aa).

Phosphoserine occurs at positions 32 and 147. Residues 120–213 (HDESTVQKIL…VASPSSLNGH (94 aa)) form a disordered region. Composition is skewed to basic and acidic residues over residues 139–149 (PYRERKGESPQ) and 159–170 (SSLEGREGKDEL). Catalysis depends on residues Y367 and H375. S406, S409, and S413 each carry phosphoserine. Residue K414 is part of the active site.

It belongs to the tRNA-intron endonuclease family. As to quaternary structure, tRNA splicing endonuclease is a heterotetramer composed of TSEN2, TSEN15, TSEN34/LENG5 and TSEN54. tRNA splicing endonuclease complex also contains proteins of the pre-mRNA 3'-end processing machinery such as CLP1, CPSF1, CPSF4 and CSTF2.

It localises to the nucleus. The protein localises to the nucleolus. It catalyses the reaction pretRNA = a 3'-half-tRNA molecule with a 5'-OH end + a 5'-half-tRNA molecule with a 2',3'-cyclic phosphate end + an intron with a 2',3'-cyclic phosphate and a 5'-hydroxyl terminus.. Functionally, constitutes one of the two catalytic subunit of the tRNA-splicing endonuclease complex, a complex responsible for identification and cleavage of the splice sites in pre-tRNA. It cleaves pre-tRNA at the 5'- and 3'-splice sites to release the intron. The products are an intron and two tRNA half-molecules bearing 2',3'-cyclic phosphate and 5'-OH termini. There are no conserved sequences at the splice sites, but the intron is invariably located at the same site in the gene, placing the splice sites an invariant distance from the constant structural features of the tRNA body. Probably carries the active site for 5'-splice site cleavage. The tRNA splicing endonuclease is also involved in mRNA processing via its association with pre-mRNA 3'-end processing factors, establishing a link between pre-tRNA splicing and pre-mRNA 3'-end formation, suggesting that the endonuclease subunits function in multiple RNA-processing events. The protein is tRNA-splicing endonuclease subunit Sen2 (Tsen2) of Rattus norvegicus (Rat).